A 159-amino-acid chain; its full sequence is Small ribosomal subunit protein uS17y (159 aa).

It belongs to the universal ribosomal protein uS17 family.

It is found in the cytoplasm. This Arabidopsis thaliana (Mouse-ear cress) protein is Small ribosomal subunit protein uS17y (RPS11B).